The chain runs to 162 residues: Cytochrome c-type biogenesis protein CcmE (162 aa).

The Cytoplasmic portion of the chain corresponds to 1-8; that stretch reads MNPRRKKR. A helical; Signal-anchor for type II membrane protein membrane pass occupies residues 9 to 29; the sequence is LTLAVALIGGVAAITSLLLYA. Topologically, residues 30–162 are periplasmic; the sequence is LNSNLNLFYT…YSQQKAPDTK (133 aa). Heme contacts are provided by H131 and Y135. The tract at residues 142–162 is disordered; sequence EAMGQKHEKLDYSQQKAPDTK. Polar residues predominate over residues 153–162; that stretch reads YSQQKAPDTK.

The protein belongs to the CcmE/CycJ family.

The protein resides in the cell inner membrane. In terms of biological role, heme chaperone required for the biogenesis of c-type cytochromes. Transiently binds heme delivered by CcmC and transfers the heme to apo-cytochromes in a process facilitated by CcmF and CcmH. The chain is Cytochrome c-type biogenesis protein CcmE from Shewanella baltica (strain OS223).